A 150-amino-acid chain; its full sequence is Large ribosomal subunit protein bL9 (150 aa).

This sequence belongs to the bacterial ribosomal protein bL9 family.

Binds to the 23S rRNA. This Staphylococcus aureus (strain NCTC 8325 / PS 47) protein is Large ribosomal subunit protein bL9.